We begin with the raw amino-acid sequence, 176 residues long: ATP-dependent protease subunit HslV (176 aa).

Thr-6 is a catalytic residue. Na(+) is bound by residues Ser-161, Cys-164, and Thr-167.

The protein belongs to the peptidase T1B family. HslV subfamily. In terms of assembly, a double ring-shaped homohexamer of HslV is capped on each side by a ring-shaped HslU homohexamer. The assembly of the HslU/HslV complex is dependent on binding of ATP.

It localises to the cytoplasm. The enzyme catalyses ATP-dependent cleavage of peptide bonds with broad specificity.. With respect to regulation, allosterically activated by HslU binding. Its function is as follows. Protease subunit of a proteasome-like degradation complex believed to be a general protein degrading machinery. This Thermosipho melanesiensis (strain DSM 12029 / CIP 104789 / BI429) protein is ATP-dependent protease subunit HslV.